We begin with the raw amino-acid sequence, 335 residues long: DNA-directed RNA polymerases I and III subunit RPAC1 (335 aa).

Serine 2 carries the post-translational modification N-acetylserine. Serine 17 is subject to Phosphoserine.

Belongs to the archaeal Rpo3/eukaryotic RPB3 RNA polymerase subunit family. Component of the RNA polymerase I (Pol I) complex consisting of 14 subunits: RPA135, RPA190, RPC40, RPA14, RPB5, RPO26, RPA43, RPB8, RPA12, RPB10, RPC19, RPC10, RPA49 and RPA34. The complex is composed of a horseshoe-shaped core containing ten subunits (RPA135, RPA190, RPB5, RPO26, RPB8, RPB10, RPC10, RPA12, RPC19 and RPC40) where RPA135 and RPA190 form the DNA-binding cleft. Outside of the core, RPA14 and RPA43 form the stalk that mediates interactions with transcription initiation factors and newly synthesized RNA. Component of the RNA polymerase III (Pol III) complex consisting of at least 17 subunits. Interacts with the RPC19/RPAC2 and RPC53/RPC4. Interacts with retrotransposons Ty integrase, targeting Ty1, Ty2 and Ty4 integration upstream of pol III-transcribed genes.

It is found in the nucleus. It localises to the nucleolus. DNA-dependent RNA polymerases catalyze the transcription of DNA into RNA using the four ribonucleoside triphosphates as substrates. Common component of RNA polymerases I (Pol I) and III (Pol III) which synthesize ribosomal RNA precursors and small RNAs, such as 5S rRNA and tRNAs, respectively. RPC40 is part of the polymerase core and may function as a clamp element that moves to open and close the cleft. Plays an important role in targeting retrotransposons Ty integration upstream of pol III-transcribed genes such as tRNA genes, allowing Ty1, Ty2 and Ty4 to proliferate and yet minimizing genetic damage. This chain is DNA-directed RNA polymerases I and III subunit RPAC1, found in Saccharomyces cerevisiae (strain ATCC 204508 / S288c) (Baker's yeast).